A 157-amino-acid polypeptide reads, in one-letter code: uncharacterized protein (157 aa).

Residues 36-63 are a coiled coil; the sequence is QIEELNELCQFFNISLTYTRESLEELEN.

This is an uncharacterized protein from Bacillus subtilis (strain 168).